The chain runs to 325 residues: Elongation factor P--(R)-beta-lysine ligase (325 aa).

76–78 (SPE) contacts substrate. ATP-binding positions include 100 to 102 (RNE) and Asn109. Tyr118 serves as a coordination point for substrate. 244-245 (EL) contributes to the ATP binding site. Residue Glu251 coordinates substrate. An ATP-binding site is contributed by Gly300.

Belongs to the class-II aminoacyl-tRNA synthetase family. EpmA subfamily. As to quaternary structure, homodimer.

It catalyses the reaction D-beta-lysine + L-lysyl-[protein] + ATP = N(6)-((3R)-3,6-diaminohexanoyl)-L-lysyl-[protein] + AMP + diphosphate + H(+). With EpmB is involved in the beta-lysylation step of the post-translational modification of translation elongation factor P (EF-P) on 'Lys-34'. Catalyzes the ATP-dependent activation of (R)-beta-lysine produced by EpmB, forming a lysyl-adenylate, from which the beta-lysyl moiety is then transferred to the epsilon-amino group of EF-P 'Lys-34'. This is Elongation factor P--(R)-beta-lysine ligase from Salmonella paratyphi A (strain ATCC 9150 / SARB42).